The primary structure comprises 432 residues: Adenylosuccinate synthetase (432 aa).

GTP-binding positions include 13 to 19 (GDEGKGK) and 41 to 43 (GHT). Catalysis depends on D14, which acts as the Proton acceptor. 2 residues coordinate Mg(2+): D14 and G41. Residues 14–17 (DEGK), 39–42 (NAGH), T130, R144, Q225, T240, and R304 contribute to the IMP site. H42 functions as the Proton donor in the catalytic mechanism. 300 to 306 (ATTGRRR) contributes to the substrate binding site. Residues R306, 332 to 334 (KLD), and 415 to 417 (STG) contribute to the GTP site.

It belongs to the adenylosuccinate synthetase family. Homodimer. Mg(2+) is required as a cofactor.

It localises to the cytoplasm. It catalyses the reaction IMP + L-aspartate + GTP = N(6)-(1,2-dicarboxyethyl)-AMP + GDP + phosphate + 2 H(+). The protein operates within purine metabolism; AMP biosynthesis via de novo pathway; AMP from IMP: step 1/2. Functionally, plays an important role in the de novo pathway of purine nucleotide biosynthesis. Catalyzes the first committed step in the biosynthesis of AMP from IMP. This chain is Adenylosuccinate synthetase, found in Sodalis glossinidius (strain morsitans).